Reading from the N-terminus, the 182-residue chain is Large ribosomal subunit protein uL5 (182 aa).

It belongs to the universal ribosomal protein uL5 family. In terms of assembly, part of the 50S ribosomal subunit; part of the 5S rRNA/L5/L18/L25 subcomplex. Contacts the 5S rRNA and the P site tRNA. Forms a bridge to the 30S subunit in the 70S ribosome.

This is one of the proteins that bind and probably mediate the attachment of the 5S RNA into the large ribosomal subunit, where it forms part of the central protuberance. In the 70S ribosome it contacts protein S13 of the 30S subunit (bridge B1b), connecting the 2 subunits; this bridge is implicated in subunit movement. Contacts the P site tRNA; the 5S rRNA and some of its associated proteins might help stabilize positioning of ribosome-bound tRNAs. The sequence is that of Large ribosomal subunit protein uL5 from Borrelia duttonii (strain Ly).